The following is a 353-amino-acid chain: Cyclin-dependent kinase-like 1 (353 aa).

The Protein kinase domain occupies 4 to 286 (YDRLSKLGEG…CSELMLHGIF (283 aa)). ATP-binding positions include 10-18 (LGEGSYGVV) and Lys-33. The active-site Proton acceptor is Asp-126. The interval 331–353 (GGNHGNNNNNGNGINRNFLPTIS) is disordered. Over residues 335–347 (GNNNNNGNGINRN) the composition is skewed to low complexity.

This sequence belongs to the protein kinase superfamily. Ser/Thr protein kinase family. Specifically expressed in head and tail ciliated sensory neurons.

Its subcellular location is the cell projection. The protein localises to the cilium. It carries out the reaction L-seryl-[protein] + ATP = O-phospho-L-seryl-[protein] + ADP + H(+). The catalysed reaction is L-threonyl-[protein] + ATP = O-phospho-L-threonyl-[protein] + ADP + H(+). Functionally, modulates cilium assembly. In Caenorhabditis elegans, this protein is Cyclin-dependent kinase-like 1.